Here is an 88-residue protein sequence, read N- to C-terminus: U-scoloptoxin(XY)-Er1b (88 aa).

Positions M1–S24 are cleaved as a signal peptide. The interval R66 to A88 is disordered. A propeptide spanning residues E79 to A88 is cleaved from the precursor.

This sequence belongs to the scoloptoxin-XY family. Post-translationally, contains 3 disulfide bonds. As to expression, expressed by the venom gland.

The protein localises to the secreted. The polypeptide is U-scoloptoxin(XY)-Er1b (Ethmostigmus rubripes (Giant centipede)).